We begin with the raw amino-acid sequence, 180 residues long: Ribulose bisphosphate carboxylase small subunit, chloroplastic 1 (180 aa).

Residues 1 to 56 constitute a chloroplast transit peptide; it reads MASSVLSSAAVATRSNVAQANMVAPFTGLKSAASFPVSRKQNLDITSIASNGGRVQ.

It belongs to the RuBisCO small chain family. Heterohexadecamer of 8 large and 8 small subunits.

It localises to the plastid. It is found in the chloroplast. In terms of biological role, ruBisCO catalyzes two reactions: the carboxylation of D-ribulose 1,5-bisphosphate, the primary event in carbon dioxide fixation, as well as the oxidative fragmentation of the pentose substrate. Both reactions occur simultaneously and in competition at the same active site. Although the small subunit is not catalytic it is essential for maximal activity. In Nicotiana sylvestris (Wood tobacco), this protein is Ribulose bisphosphate carboxylase small subunit, chloroplastic 1.